A 131-amino-acid polypeptide reads, in one-letter code: Probable histone H2A.3 (131 aa).

The disordered stretch occupies residues 1-23 (MAGRGKQLGSGAAKKSTSRSSKA). A compositionally biased stretch (low complexity) spans 9–23 (GSGAAKKSTSRSSKA).

The protein belongs to the histone H2A family. In terms of assembly, the nucleosome is a histone octamer containing two molecules each of H2A, H2B, H3 and H4 assembled in one H3-H4 heterotetramer and two H2A-H2B heterodimers. The octamer wraps approximately 147 bp of DNA. In terms of processing, not ubiquitinated. As to expression, expressed in meristems and dividing cells.

It localises to the nucleus. The protein resides in the chromosome. Core component of nucleosome. Nucleosomes wrap and compact DNA into chromatin, limiting DNA accessibility to the cellular machineries which require DNA as a template. Histones thereby play a central role in transcription regulation, DNA repair, DNA replication and chromosomal stability. DNA accessibility is regulated via a complex set of post-translational modifications of histones, also called histone code, and nucleosome remodeling. This chain is Probable histone H2A.3, found in Arabidopsis thaliana (Mouse-ear cress).